A 211-amino-acid chain; its full sequence is Small ribosomal subunit protein uS3 (211 aa).

A KH type-2 domain is found at 38-106; sequence LRNFLKKRLF…EIYLNIQEVR (69 aa).

The protein belongs to the universal ribosomal protein uS3 family. In terms of assembly, part of the 30S ribosomal subunit. Forms a tight complex with proteins S10 and S14.

In terms of biological role, binds the lower part of the 30S subunit head. Binds mRNA in the 70S ribosome, positioning it for translation. In Geobacter metallireducens (strain ATCC 53774 / DSM 7210 / GS-15), this protein is Small ribosomal subunit protein uS3.